The chain runs to 582 residues: MNKLYIGNVSEQASALDLESIFEQWKIPFSAPFLVKSGYAFVDCPDEKVAMRAIDTLSGKVELHGKVLEVEHSVPKRQRSCKLQIRNIPPHMQWEVLDGLLAQYGTVESCEQVNTDTETAVVNVRYGAKDQAREAMDKLNGFLMENYALKVSYIPDETAAADAPAVGGRRGFNPRGPPRQGSPSLGARPKLQSDVPLRLLVPTQFVGAIIGKEGATIRNITKQTHSKIDIHRKENAGAAEKPITVHSTPEGCSSACRNIMEIMQKEAIDTKITEEIPLKILAHNNFVGRLIGKEGRNLKKIEQDTDTKITISPLQDLTLYNPERTITVKGTLDACAKAEEEIMKKVRESYENDVAAMHLQSNLIPGLNLNALGLFPGAASGGISPSVVSGPPPGAQAGYQSFGAQMESETVHLFIPALAVGAIIGKQGQHIKQLSRFAGASIKIAPADGIDAKQRMVIISGPPEAQFKAQGRIFGKLKEENFFGPKEEVKLEAHIKVPSFAAGRVIGKGGKTVNELQNLTSAEVVVPRDQTPDENDQVVVKITGHFYASQLAQRKIQEIISQVRRQQQPKPSAAGPPVARRK.

2 consecutive RRM domains span residues 2-75 and 81-156; these read NKLY…HSVP and CKLQ…YIPD. The tract at residues 164-190 is disordered; that stretch reads PAVGGRRGFNPRGPPRQGSPSLGARPK. Ser182 is modified (phosphoserine). KH domains follow at residues 194–259, 275–342, 408–473, and 490–556; these read DVPL…CRNI, EIPL…EEEI, SETV…QGRI, and KLEA…QRKI. A disordered region spans residues 562–582; that stretch reads QVRRQQQPKPSAAGPPVARRK.

The protein belongs to the RRM IMP/VICKZ family. As to quaternary structure, homodimer and multimer.

It localises to the cytoplasm. It is found in the nucleus. Its subcellular location is the P-body. The protein localises to the stress granule. Its function is as follows. RNA-binding factor that may recruit target transcripts to cytoplasmic protein-RNA complexes (mRNPs). This transcript 'caging' into mRNPs allows mRNA transport and transient storage. It also modulates the rate and location at which target transcripts encounter the translational apparatus and shields them from endonuclease attacks or microRNA-mediated degradation. Preferentially binds to N6-methyladenosine (m6A)-containing mRNAs and increases their stability. Involved in neuronal crest migration. This is Insulin-like growth factor 2 mRNA-binding protein 3 (igf2bp3) from Danio rerio (Zebrafish).